A 526-amino-acid polypeptide reads, in one-letter code: ATP synthase subunit alpha (526 aa).

171-178 provides a ligand contact to ATP; the sequence is GDRQTGKT.

This sequence belongs to the ATPase alpha/beta chains family. As to quaternary structure, F-type ATPases have 2 components, CF(1) - the catalytic core - and CF(0) - the membrane proton channel. CF(1) has five subunits: alpha(3), beta(3), gamma(1), delta(1), epsilon(1). CF(0) has four main subunits: a(1), b(1), b'(1) and c(9-12).

The protein localises to the cell inner membrane. The catalysed reaction is ATP + H2O + 4 H(+)(in) = ADP + phosphate + 5 H(+)(out). In terms of biological role, produces ATP from ADP in the presence of a proton gradient across the membrane. The alpha chain is a regulatory subunit. The chain is ATP synthase subunit alpha from Chlorobium chlorochromatii (strain CaD3).